The following is a 313-amino-acid chain: MSHSRHRAEAPPLQREDSGTFSLGKMITAKPGKTPIQVLHEYGMKTKNIPVYECERSDVQVHVPTFTFRVTVGDITCTGEGTSKKLAKHRAAEAAINILKANASICFAVPDPLMPDPSKQPKNQLNPIGSLQELAIHHGWRLPEYTLSQEGGPAHKREYTTICRLESFMETGKGASKKQAKRNAAEKFLAKFSNISPENHISLTNVVGHSLGCTWHSLRNSPGEKINLLKRSLLSLPNTDYIQLLSEIASEQGFNITYLDIEELSANGQYQCLAELSTSPITVCHGSGISCGNAQSDAAHNALQYLKIIAERK.

The segment at 1-20 (MSHSRHRAEAPPLQREDSGT) is disordered. 3 sufficient for self-association and interaction with TARBP2 regions span residues 1-103 (MSHS…KANA), 102-195 (NASI…FSNI), and 195-313 (ISPE…AERK). Position 18 is a phosphoserine (Ser-18). DRBM domains are found at residues 34–101 (TPIQ…ILKA), 126–194 (NPIG…KFSN), and 240–308 (DYIQ…YLKI). 3 positions are modified to phosphoserine: Ser-167, Ser-246, and Ser-287.

It belongs to the PRKRA family. Homodimer. Interacts with DICER1, AGO2 and TARBP2. Also able to interact with dsRNA. Interacts with EIF2AK2/PKR through its DRBM domains. Interacts with DUS2L (via DRBM domain). Interacts with UBC9. Forms a complex with UBC9 and p53/TP53. In terms of processing, phosphorylated at Ser-246 in unstressed cells and at Ser-287 in stressed cells. Phosphorylation at Ser-246 appears to be a prerequisite for subsequent phosphorylation at Ser-287. Phosphorylation at Ser-246 and Ser-287 are necessary for activation of EIF2AK2/PKR under conditions of stress. In terms of tissue distribution, expressed in brain, heart, kidney, liver, lung, muscle, spleen and testis.

Its subcellular location is the cytoplasm. The protein resides in the perinuclear region. Required for siRNA production by DICER1 and for subsequent siRNA-mediated post-transcriptional gene silencing. Does not seem to be required for processing of pre-miRNA to miRNA by DICER1. Activates EIF2AK2/PKR in the absence of double-stranded RNA (dsRNA), leading to phosphorylation of EIF2S1/EFI2-alpha and inhibition of translation and induction of apoptosis. Promotes UBC9-p53/TP53 association and sumoylation and phosphorylation of p53/TP53 at 'Lys-386' at 'Ser-392' respectively and enhances its activity in a EIF2AK2/PKR-dependent manner. The polypeptide is Interferon-inducible double-stranded RNA-dependent protein kinase activator A (Prkra) (Mus musculus (Mouse)).